Consider the following 442-residue polypeptide: MSKTYHFIGIKGSGMSALALMLHQMGHMVQGSDVEKYYFTQRGLEQAGITILPFSEDNITPDMELIVGNAFRENNKEVAYALRHQIPFKRYHDFLGDFMKSFISFAVAGAHGKTSTTGLLSHVLKNITDTSYLIGDGTGRGSANAQYFVFESDEYERHFMPYHPEYSIITNIDFDHPDYFTGIADVRNAFNDYAKQVKKALFVYGEDDELKKIEAPAPIYYYGFEEGNDFIAYDITRTTNGSDFKVKHQGEVIGQFHVPAYGKHNILNATAVIANLFVAGIDMALVADHLKTFSGVKRRFTEKIVNDTIIIDDFAHHPTEIVATIDAARQKYPSKEIVAIFQPHTFTRTIALLEDFACALNEADSVYLAQIYGSAREVDKGEVKVEDLAAKIIKPSQVVTVENVSPLLDHDNAVYVFMGAGDIQLYEHSFEELLANLTKNNQ.

109–115 (GAHGKTS) is an ATP binding site.

This sequence belongs to the MurCDEF family.

The protein localises to the cytoplasm. It catalyses the reaction UDP-N-acetyl-alpha-D-muramate + L-alanine + ATP = UDP-N-acetyl-alpha-D-muramoyl-L-alanine + ADP + phosphate + H(+). It participates in cell wall biogenesis; peptidoglycan biosynthesis. Cell wall formation. The sequence is that of UDP-N-acetylmuramate--L-alanine ligase from Streptococcus pyogenes serotype M18 (strain MGAS8232).